A 592-amino-acid chain; its full sequence is Aspartate--tRNA ligase (592 aa).

Glutamate 171 contacts L-aspartate. The aspartate stretch occupies residues 195-198 (QLFK). Residue arginine 217 coordinates L-aspartate. Residues 217–219 (RDE) and glutamine 226 contribute to the ATP site. Position 448 (histidine 448) interacts with L-aspartate. Glutamate 482 contacts ATP. L-aspartate is bound at residue arginine 489. 534–537 (GLDR) lines the ATP pocket.

The protein belongs to the class-II aminoacyl-tRNA synthetase family. Type 1 subfamily. As to quaternary structure, homodimer.

Its subcellular location is the cytoplasm. The catalysed reaction is tRNA(Asp) + L-aspartate + ATP = L-aspartyl-tRNA(Asp) + AMP + diphosphate. Functionally, catalyzes the attachment of L-aspartate to tRNA(Asp) in a two-step reaction: L-aspartate is first activated by ATP to form Asp-AMP and then transferred to the acceptor end of tRNA(Asp). This Vibrio campbellii (strain ATCC BAA-1116) protein is Aspartate--tRNA ligase.